We begin with the raw amino-acid sequence, 382 residues long: Layilin (382 aa).

The signal sequence occupies residues 1–21; sequence MRPGTALQAVLLAVLLVGLRA. The Extracellular segment spans residues 22 to 235; the sequence is ATGRLLSASD…SREAALNLAY (214 aa). The 141-residue stretch at 45-185 folds into the C-type lectin domain; that stretch reads TQRPCYKVIY…CNMKNNFICK (141 aa). 2 cysteine pairs are disulfide-bonded: Cys71-Cys184 and Cys150-Cys176. Residue Asn117 is glycosylated (N-linked (GlcNAc...) asparagine). A helical membrane pass occupies residues 236-256; the sequence is ILIPSIPLLLLLVVTTVVCWV. Residues 257 to 382 lie on the Cytoplasmic side of the membrane; that stretch reads WICRKRKREQ…GWVENEIYGY (126 aa). The tract at residues 266–285 is disordered; it reads QPDPSTKKQHTIWPSPHQGN. A phosphoserine mark is found at Ser286 and Ser299. The segment at 330–374 is interaction with NF2; the sequence is DYDNMAVNPSESGFVTLVSVESGFVTNDIYEFSPDQMGRSKESGW. The segment at 337-382 is interaction with TLN1; it reads NPSESGFVTLVSVESGFVTNDIYEFSPDQMGRSKESGWVENEIYGY. 5 repeat units span residues 340-344, 350-354, 356-359, 371-375, and 377-380. The interval 340-375 is 3 X 5 AA repeats of E-S-G-X-V; sequence ESGFVTLVSVESGFVTNDIYEFSPDQMGRSKESGWV. A 2 X 4 AA repeats of N-X-I-Y region spans residues 356–380; the sequence is NDIYEFSPDQMGRSKESGWVENEIY.

As to quaternary structure, interacts with NF2, RDX and TLN1.

The protein localises to the membrane. Its function is as follows. Receptor for hyaluronate. The protein is Layilin (LAYN) of Homo sapiens (Human).